Consider the following 89-residue polypeptide: MPITKEEKQKVIQEFARFPGDTGSTEVQVALLTLRINRLSEHLKVHKKDHHSHRGLLMMVGQRRRLLRYLQREDPERYRALIEKLGIRG.

The protein belongs to the universal ribosomal protein uS15 family. Part of the 30S ribosomal subunit. Forms a bridge to the 50S subunit in the 70S ribosome, contacting the 23S rRNA.

Its function is as follows. One of the primary rRNA binding proteins, it binds directly to 16S rRNA where it helps nucleate assembly of the platform of the 30S subunit by binding and bridging several RNA helices of the 16S rRNA. Functionally, forms an intersubunit bridge (bridge B4) with the 23S rRNA of the 50S subunit in the ribosome. The chain is Small ribosomal subunit protein uS15 from Thermus thermophilus (strain ATCC BAA-163 / DSM 7039 / HB27).